The sequence spans 600 residues: NADH-quinone oxidoreductase subunit C/D (600 aa).

The segment at 1-190 (MVNNMTDLTA…SPFELTKAKQ (190 aa)) is NADH dehydrogenase I subunit C. The NADH dehydrogenase I subunit D stretch occupies residues 214 to 600 (DFMFLNLGPN…IDFVMSDVDR (387 aa)).

The protein in the N-terminal section; belongs to the complex I 30 kDa subunit family. This sequence in the C-terminal section; belongs to the complex I 49 kDa subunit family. NDH-1 is composed of 13 different subunits. Subunits NuoB, CD, E, F, and G constitute the peripheral sector of the complex.

It is found in the cell inner membrane. It carries out the reaction a quinone + NADH + 5 H(+)(in) = a quinol + NAD(+) + 4 H(+)(out). In terms of biological role, NDH-1 shuttles electrons from NADH, via FMN and iron-sulfur (Fe-S) centers, to quinones in the respiratory chain. The immediate electron acceptor for the enzyme in this species is believed to be ubiquinone. Couples the redox reaction to proton translocation (for every two electrons transferred, four hydrogen ions are translocated across the cytoplasmic membrane), and thus conserves the redox energy in a proton gradient. The polypeptide is NADH-quinone oxidoreductase subunit C/D (Escherichia coli (strain ATCC 8739 / DSM 1576 / NBRC 3972 / NCIMB 8545 / WDCM 00012 / Crooks)).